A 423-amino-acid chain; its full sequence is ATP-dependent Clp protease ATP-binding subunit ClpX (423 aa).

The ClpX-type ZB domain occupies 1–50; the sequence is MTDDTEYRCSFCGKEHHQVDDLIAGPDVRICSECVVLSCEIVEDRRNEAL. The Zn(2+) site is built by C9, C12, C31, and C34. 126-133 lines the ATP pocket; it reads PTGCGKTY.

The protein belongs to the ClpX chaperone family. In terms of assembly, component of the ClpX-ClpP complex. Forms a hexameric ring that, in the presence of ATP, binds to fourteen ClpP subunits assembled into a disk-like structure with a central cavity, resembling the structure of eukaryotic proteasomes.

Functionally, ATP-dependent specificity component of the Clp protease. It directs the protease to specific substrates. Can perform chaperone functions in the absence of ClpP. In Tropheryma whipplei (strain Twist) (Whipple's bacillus), this protein is ATP-dependent Clp protease ATP-binding subunit ClpX.